A 64-amino-acid chain; its full sequence is DNA gyrase inhibitor YacG (64 aa).

Zn(2+) contacts are provided by Cys-9, Cys-12, Cys-28, and Cys-32. The interval 42–64 (DEENAIPGAPDMSDSDGWSEEQY) is disordered. The segment covering 54–64 (SDSDGWSEEQY) has biased composition (acidic residues).

The protein belongs to the DNA gyrase inhibitor YacG family. As to quaternary structure, interacts with GyrB. Zn(2+) is required as a cofactor.

Functionally, inhibits all the catalytic activities of DNA gyrase by preventing its interaction with DNA. Acts by binding directly to the C-terminal domain of GyrB, which probably disrupts DNA binding by the gyrase. In Vibrio vulnificus (strain YJ016), this protein is DNA gyrase inhibitor YacG.